The following is an 860-amino-acid chain: Nucleolar MIF4G domain-containing protein 1 (860 aa).

Disordered regions lie at residues 1 to 172 (MAAS…AARK), 191 to 211 (RCLG…PLSF), and 226 to 339 (GKNS…EKYI). Residues 1–269 (MAASRSAGEA…EEEEEGDVEK (269 aa)) are necessary for nucleolar localization and for targeting PPP1CA to the nucleolus. Residues 20–31 (VRMKRRGGRGPR) are compositionally biased toward basic residues. Serine 57 carries the phosphoserine modification. The span at 77–99 (GGRKSRKELRKEKRHLRKARRLQ) shows a compositional bias: basic residues. Residues 115-131 (GAEEASGHRQDTEERAR) are compositionally biased toward basic and acidic residues. Position 139 is a phosphoserine (serine 139). A compositionally biased stretch (basic residues) spans 142–151 (RKPRPSRVKA). A compositionally biased stretch (low complexity) spans 152-169 (KATAATAKTRPSAAATAA). 2 stretches are compositionally biased toward acidic residues: residues 249 to 267 (SDLE…EGDV) and 278 to 293 (AQSE…EQGE). A Required for efficient binding to PPP1CA and for targeting PPP1CA to the nucleolus motif is present at residues 307-310 (RVRF). Acidic residues predominate over residues 312–325 (EDEEKSENSSEDGD). Residues serine 317, serine 320, and serine 321 each carry the phosphoserine modification. The MIF4G domain maps to 362 to 559 (KKHVKGLLNR…ETMLALKNND (198 aa)). One can recognise an MI domain in the interval 654 to 770 (DIRRNIFCTI…SLSILKVVEF (117 aa)).

It belongs to the CWC22 family. As to quaternary structure, may interact with EIF4A1, EIF4A2 and EIF4A3. Interacts with PPP1CA and PPP1CC. In terms of tissue distribution, expressed in heart and skeletal muscle.

It localises to the nucleus. The protein localises to the nucleolus. Its function is as follows. Plays a role in targeting PPP1CA to the nucleolus. The protein is Nucleolar MIF4G domain-containing protein 1 (NOM1) of Homo sapiens (Human).